The sequence spans 108 residues: Iron-sulfur cluster assembly protein CyaY (108 aa).

Belongs to the frataxin family.

Its function is as follows. Involved in iron-sulfur (Fe-S) cluster assembly. May act as a regulator of Fe-S biogenesis. The sequence is that of Iron-sulfur cluster assembly protein CyaY from Pseudomonas paraeruginosa (strain DSM 24068 / PA7) (Pseudomonas aeruginosa (strain PA7)).